The primary structure comprises 405 residues: MEIILGIVMFTVIVLVLALMILFAKSKLVSEGDITIKVNGEKELTMPAGGKLLGALANEGIFIPSACGGGGSCGQCRVVVKSGGGDILPTELSHISKREAREGCRLSCQVNVKTDMDIEVPEEVFGVKKWECTVISNDNKATFIKELKLAIPEGEEVPFRAGGYIQIEAPPHTVAYKDFDIPEEYHEDWDKYNLWQYVSKVDEPILRAYSMASYPEEKGIIMLNVRIATPPPRVPDAPPGQMSSYIWSLKPGDKVTISGPFGEFFAKDTDAEMVFIGGGAGMAPMRSHIFDQLKRLNSKRKITFWYGARSKREMFYVEDFDQLAAEFPNFTWHVALSDPLPEDNWDGYTGFIHNVVYENHLKNHEAPEDCEFYMCGPPIMNQSVIKMLKDLGVEDENILLDDFGG.

The chain crosses the membrane as a helical span at residues 3–23; the sequence is IILGIVMFTVIVLVLALMILF. One can recognise a 2Fe-2S ferredoxin-type domain in the interval 32-124; it reads GDITIKVNGE…DMDIEVPEEV (93 aa). [2Fe-2S] cluster-binding residues include Cys-67, Cys-73, Cys-76, and Cys-108. Residues 127-267 form the FAD-binding FR-type domain; it reads VKKWECTVIS…SGPFGEFFAK (141 aa).

The protein belongs to the NqrF family. In terms of assembly, composed of six subunits; NqrA, NqrB, NqrC, NqrD, NqrE and NqrF. [2Fe-2S] cluster is required as a cofactor. Requires FAD as cofactor.

The protein resides in the cell inner membrane. It catalyses the reaction a ubiquinone + n Na(+)(in) + NADH + H(+) = a ubiquinol + n Na(+)(out) + NAD(+). Its function is as follows. NQR complex catalyzes the reduction of ubiquinone-1 to ubiquinol by two successive reactions, coupled with the transport of Na(+) ions from the cytoplasm to the periplasm. The first step is catalyzed by NqrF, which accepts electrons from NADH and reduces ubiquinone-1 to ubisemiquinone by a one-electron transfer pathway. The polypeptide is Na(+)-translocating NADH-quinone reductase subunit F (Neisseria meningitidis serogroup C / serotype 2a (strain ATCC 700532 / DSM 15464 / FAM18)).